The sequence spans 295 residues: Indole-3-glycerol phosphate synthase (295 aa).

It belongs to the TrpC family.

It carries out the reaction 1-(2-carboxyphenylamino)-1-deoxy-D-ribulose 5-phosphate + H(+) = (1S,2R)-1-C-(indol-3-yl)glycerol 3-phosphate + CO2 + H2O. It functions in the pathway amino-acid biosynthesis; L-tryptophan biosynthesis; L-tryptophan from chorismate: step 4/5. The chain is Indole-3-glycerol phosphate synthase from Prochlorococcus marinus (strain MIT 9211).